We begin with the raw amino-acid sequence, 584 residues long: MDEYYRTPLYYSSTHLHDLADILPCESCKACEKVYLDYFIAKENEDMINKYFDDITYDVPISKYRNTTMYADALVNDGYLKDLFSLTKPDMARSEEAIEMESLVKELKFAKVPRLGRFMATVMTMLFEQNLEQHRYVNNHTIHKMGFLCLYCYHHMNEYYKVEEEDMANEIIEKMGAVRYEHVDDIMEEFTDCDYIRNHLFADSVLVILPSKMINKIRSNIMADISNGWAEYDGREMANIICESDGIPSFRIKNPRKYVLERLSNTIDEYIYQSRIRGLAKVYWILGGDDMKTTEDPIIHIYFCARNVYISLSPTFFDNPARRDELWNEIARMYNSLYTTQMNFSENLHIGCIKYKGVEYSSYMEQLFGRYSDEIATSEEWGKALLRPLFVCANGEEARQEMEESITKIERLWKNFHFNYEVNIDESLLGKDVGIIRRLFVLYRRRFPNSHRVHVESKCDVNLENPRLSVMMNGDLNGFIVSLLIPCGRKPETAHIIKEIMTVFEDTKILPVFHKKAVYCECHHDGDEEDDDHIFPIFIQPVKNPMRSLFSLTMDVIHTKLSNSKEVMKETFPARVIQQFNNSL.

This is an uncharacterized protein from Magallana gigas (Pacific oyster).